The sequence spans 526 residues: DNA polymerase epsilon subunit B (526 aa).

The protein belongs to the DNA polymerase epsilon subunit B family. Subunit of the DNA polymerase II. Interacts with POL2A (via C-terminus).

The protein resides in the nucleus. In terms of biological role, as accessory component of DNA polymerase II participates in chromosomal DNA replication. Required for the timing and determination of cell fate during plant embryogenesis and root pole development, by promoting cell cycle and cell type patterning. Necessary for proper shoot (SAM) and root apical meristem (RAM) functions. Is essential to promote the first divisions of the zygote. In Arabidopsis thaliana (Mouse-ear cress), this protein is DNA polymerase epsilon subunit B.